The following is a 723-amino-acid chain: Delta-like protein 1 (723 aa).

The N-terminal stretch at 1–17 is a signal peptide; sequence MGSRCALALAVLSALLC. Over 18 to 545 the chain is Extracellular; the sequence is QVWSSGVFEL…LEGQGGPFPW (528 aa). A DSL domain is found at 177-221; that stretch reads FVCDEHYYGEGCSVFCRPRDDAFGHFTCGERGEKVCNPGWKGPYC. 27 disulfide bridges follow: Cys179–Cys188, Cys192–Cys204, Cys212–Cys221, Cys226–Cys237, Cys230–Cys243, Cys245–Cys254, Cys257–Cys268, Cys263–Cys274, Cys276–Cys285, Cys292–Cys304, Cys298–Cys314, Cys316–Cys325, Cys332–Cys343, Cys337–Cys352, Cys354–Cys363, Cys370–Cys381, Cys375–Cys391, Cys393–Cys402, Cys409–Cys420, Cys414–Cys429, Cys431–Cys440, Cys447–Cys458, Cys452–Cys467, Cys469–Cys478, Cys485–Cys496, Cys490–Cys505, and Cys507–Cys516. 3 EGF-like domains span residues 226–254, 257–285, and 292–325; these read CLPG…GRYC, CIRY…GLFC, and CTHH…GATC. The 32-residue stretch at 332 to 363 folds into the EGF-like 4; calcium-binding domain; that stretch reads CDPSPCKNGGSCTDLENSYSCTCPPGFYGKIC. EGF-like domains follow at residues 370-402 and 409-440; these read CADG…GFNC and CSSS…GRHC. Residues 447-478 form the EGF-like 7; calcium-binding domain; sequence CASSPCANGGTCRDGVNDFSCTCPPGYTGRNC. Asn477 is a glycosylation site (N-linked (GlcNAc...) asparagine). An EGF-like 8 domain is found at 485-516; sequence CEHAPCHNGATCHERGHRYVCECARGYGGPNC. A helical membrane pass occupies residues 546–568; that stretch reads VAVCAGVILVLMLLLGCAAVVVC. The Cytoplasmic segment spans residues 569 to 723; the sequence is VRLRLQKHRP…KDECVIATEV (155 aa). Residue Lys613 forms a Glycyl lysine isopeptide (Lys-Gly) (interchain with G-Cter in ubiquitin) linkage. Positions 653–664 are enriched in basic and acidic residues; sequence AVRDAHSKRDTK. The tract at residues 653 to 702 is disordered; that stretch reads AVRDAHSKRDTKCQPQGSSGEEKGTPTTLRGGEASERKRPDSGCSTSKDT. At Ser694 the chain carries Phosphoserine; by PKB. Residue Ser697 is modified to Phosphoserine. Residues 720–723 form an interaction with MAGI1 region; it reads ATEV.

As to quaternary structure, homodimer. Interacts with TJP1. Interacts with MAGI1 (via PDZ domain); forms a complex with CTNNB1 and CDH2 and promotes recruitment to the adherens junction and stabilization on the cell surface. Interacts with PSEN1; undergoes a presenilin-dependent gamma-secretase cleavage that releases a Dll1-intracellular form. Interacts with MFAP5. Interacts with MIB1. Interacts with NEURL1B; leads to ubiquitination. Interacts with NEURL1. Interacts with SYNJ2BP; enhances DLL1 protein stability, and promotes Notch signaling in endothelial cells. Interacts with MAGI1, MAGI2, MAGI3 and MPDZ. Interacts (via ubiquitin) with EPN1 (via IUM domain); binding with NOTCH1 attached to neighboring cell, promotes ligand ubiquitination and EPN1 interaction, leading to NECD transendocytosis and Notch signaling. Interacts with NOTCH1. Interacts with NOTCH2NLB; leading to promote Notch signaling pathway in a cell-autonomous manner through inhibition of cis DLL1-NOTCH2 interactions. Ubiquitinated by MIB (MIB1 or MIB2), leading to its endocytosis and subsequent degradation. Ubiquitinated; promotes recycling back to the plasma membrane and confers a strong affinity for NOTCH1. Multi-ubiquitination of Lys-613 by MIB1 promotes both cis and trans-interaction with NOTCH1, as well as activation of Notch signaling. Ubiquitinated by NEURL1B. In terms of processing, phosphorylated in a membrane association-dependent manner. Phosphorylation at Ser-697 requires the presence of Ser-694, whereas phosphorylation at Ser-694 occurs independently of the other site. Phosphorylation is required for full ligand activity in vitro and affects surface presentation, ectodomain shedding, and endocytosis. Post-translationally, O-fucosylated. Can be elongated to a disaccharide by MFNG. In terms of tissue distribution, expressed in heart and pancreas, with lower expression in brain and muscle and almost no expression in placenta, lung, liver and kidney.

The protein resides in the apical cell membrane. It localises to the cell junction. The protein localises to the adherens junction. It is found in the membrane raft. Transmembrane ligand protein of NOTCH1, NOTCH2 and NOTCH3 receptors that binds the extracellular domain (ECD) of Notch receptor in a cis and trans fashion manner. Following transinteraction, ligand cells produce mechanical force that depends of a clathrin-mediated endocytosis, requiring ligand ubiquitination, EPN1 interaction, and actin polymerisation; these events promote Notch receptor extracellular domain (NECD) transendocytosis and triggers Notch signaling through induction of cleavage, hyperphosphorylation, and nuclear accumulation of the intracellular domain of Notch receptors (NICD). Is required for embryonic development and maintenance of adult stem cells in many different tissues and immune systeme; the DLL1-induced Notch signaling is mediated through an intercellular communication that regulates cell lineage, cell specification, cell patterning and morphogenesis through effects on differentiation and proliferation. Plays a role in brain development at different level, namely by regulating neuronal differentiation of neural precursor cells via cell-cell interaction, most likely through the lateral inhibitory system in an endogenous level dependent-manner. During neocortex development, Dll1-Notch signaling transmission is mediated by dynamic interactions between intermediate neurogenic progenitors and radial glia; the cell-cell interactions are mediated via dynamic and transient elongation processes, likely to reactivate/maintain Notch activity in neighboring progenitors, and coordinate progenitor cell division and differentiation across radial and zonal boundaries. During cerebellar development, regulates Bergmann glial monolayer formation and its morphological maturation through a Notch signaling pathway. At the retina and spinal cord level, regulates neurogenesis by preventing the premature differentiation of neural progenitors and also by maintaining progenitors in spinal cord through Notch signaling pathway. Also controls neurogenesis of the neural tube in a progenitor domain-specific fashion along the dorsoventral axis. Maintains quiescence of neural stem cells and plays a role as a fate determinant that segregates asymmetrically to one daughter cell during neural stem cells mitosis, resulting in neuronal differentiation in Dll1-inheriting cell. Plays a role in immune systeme development, namely the development of all T-cells and marginal zone (MZ) B-cells. Blocks the differentiation of progenitor cells into the B-cell lineage while promoting the emergence of a population of cells with the characteristics of a T-cell/NK-cell precursor. Also plays a role during muscle development. During early development, inhibits myoblasts differentiation from the medial dermomyotomal lip and later regulates progenitor cell differentiation. Directly modulates cell adhesion and basal lamina formation in satellite cells through Notch signaling. Maintains myogenic progenitors pool by suppressing differentiation through down-regulation of MYOD1 and is required for satellite cell homing and PAX7 expression. During craniofacial and trunk myogenesis suppresses differentiation of cranial mesoderm-derived and somite-derived muscle via MYOD1 regulation but in cranial mesoderm-derived progenitors, is neither required for satellite cell homing nor for PAX7 expression. Also plays a role during pancreatic cell development. During type B pancreatic cell development, may be involved in the initiation of proximodistal patterning in the early pancreatic epithelium. Stimulates multipotent pancreatic progenitor cells proliferation and pancreatic growth by maintaining HES1 expression and PTF1A protein levels. During fetal stages of development, is required to maintain arterial identity and the responsiveness of arterial endothelial cells for VEGFA through regulation of KDR activation and NRP1 expression. Controls sprouting angiogenesis and subsequent vertical branch formation through regulation on tip cell differentiation. Negatively regulates goblet cell differentiation in intestine and controls secretory fat commitment through lateral inhibition in small intestine. Plays a role during inner ear development; negatively regulates auditory hair cell differentiation. Plays a role during nephron development through Notch signaling pathway. Regulates growth, blood pressure and energy homeostasis. This is Delta-like protein 1 from Homo sapiens (Human).